We begin with the raw amino-acid sequence, 341 residues long: MIELKEVVKEYRTKNKEVLAVDHVNLSIRAGSIYGVIGFSGAGKSTLIRMFNHLEAPTSGEVIIDGDHIGQLSKNGLRAKRQKVSMIFQHFNLLWSRTVLKNIMFPLEIAGVPRRRAKQKALELVELVGLKGREKAYPSELSGGQKQRVGIARALANDPTVLLCDEATSALDPQTTDEILDLLLKIREQQNLTIVLITHEMHVIRRICDEVAVMESGKVIEHGPVTQVFENPQHTVTKRFVKEDLNDDFETSLTELEPLEKYAYIVRLVFAGSTTTEPIVSSLSTAYDIKINILEANIKNTKNGTVGFLVLHIPYISSVDFGKFEKELIERQVKMEVLRHG.

Residues 2–241 (IELKEVVKEY…PQHTVTKRFV (240 aa)) enclose the ABC transporter domain. An ATP-binding site is contributed by 38–45 (GFSGAGKS).

This sequence belongs to the ABC transporter superfamily. Methionine importer (TC 3.A.1.24) family. In terms of assembly, the complex is composed of two ATP-binding proteins (MetN), two transmembrane proteins (MetI) and a solute-binding protein (MetQ).

The protein resides in the cell membrane. The catalysed reaction is L-methionine(out) + ATP + H2O = L-methionine(in) + ADP + phosphate + H(+). It catalyses the reaction D-methionine(out) + ATP + H2O = D-methionine(in) + ADP + phosphate + H(+). Its function is as follows. Part of the ABC transporter complex MetNIQ involved in methionine import. Responsible for energy coupling to the transport system. The chain is Methionine import ATP-binding protein MetN 2 from Staphylococcus aureus (strain bovine RF122 / ET3-1).